A 183-amino-acid chain; its full sequence is Capsid protein (183 aa).

Residues 136–183 form a disordered region; the sequence is NAPILSTLPETTVVRRRGRSPRRRTPSPRRRRSQSPRRRRSQSPASQC. A compositionally biased stretch (basic residues) spans 149–176; that stretch reads VRRRGRSPRRRTPSPRRRRSQSPRRRRS. Phosphoserine; by host occurs at positions 155, 162, and 170. A 1; half-length repeat occupies 155-161; sequence SPRRRTP. Residues 155-177 form a 3 X 8 AA repeats of S-P-R-R-R-[PR]-S-Q region; sequence SPRRRTPSPRRRRSQSPRRRRSQ. A Bipartite nuclear localization signal motif is present at residues 158–175; the sequence is RRTPSPRRRRSQSPRRRR. Repeat copies occupy residues 162 to 169 and 170 to 177. The RNA binding stretch occupies residues 177–183; sequence QSPASQC.

Belongs to the orthohepadnavirus core antigen family. Homodimerizes, then multimerizes. Interacts with cytosol exposed regions of viral L glycoprotein present in the reticulum-to-Golgi compartment. Interacts with human FLNB. Phosphorylated form interacts with host importin alpha; this interaction depends on the exposure of the NLS, which itself depends upon genome maturation and/or phosphorylation of the capsid protein. Interacts with host NUP153. Phosphorylated by host SRPK1, SRPK2, and maybe protein kinase C or GAPDH. Phosphorylation is critical for pregenomic RNA packaging. Protein kinase C phosphorylation is stimulated by HBx protein and may play a role in transport of the viral genome to the nucleus at the late step during the viral replication cycle.

The protein localises to the virion. Its subcellular location is the host cytoplasm. Its function is as follows. Self assembles to form an icosahedral capsid. Most capsids appear to be large particles with an icosahedral symmetry of T=4 and consist of 240 copies of capsid protein, though a fraction forms smaller T=3 particles consisting of 180 capsid proteins. Entering capsids are transported along microtubules to the nucleus. Phosphorylation of the capsid is thought to induce exposure of nuclear localization signal in the C-terminal portion of the capsid protein that allows binding to the nuclear pore complex via the importin (karyopherin-) alpha and beta. Capsids are imported in intact form through the nuclear pore into the nuclear basket, where it probably binds NUP153. Only capsids that contain the mature viral genome can release the viral DNA and capsid protein into the nucleoplasm. Immature capsids get stuck in the basket. Capsids encapsulate the pre-genomic RNA and the P protein. Pre-genomic RNA is reverse-transcribed into DNA while the capsid is still in the cytoplasm. The capsid can then either be directed to the nucleus, providing more genomes for transcription, or bud through the endoplasmic reticulum to provide new virions. In Hepatitis B virus genotype F2 (isolate Brazil/w4B) (HBV-F), this protein is Capsid protein.